Reading from the N-terminus, the 257-residue chain is UPF0246 protein Ping_3037 (257 aa).

Belongs to the UPF0246 family.

The polypeptide is UPF0246 protein Ping_3037 (Psychromonas ingrahamii (strain DSM 17664 / CCUG 51855 / 37)).